The following is a 425-amino-acid chain: MQHNSYRRWITLAIISFSGGVSFDLAYLRYIYQIPMAKFMGFSNTEIGLIMSTFGIAAIILYAPSGVIADKFSHRKMITSAMIITGLLGLLMATYPPLWVMLCIQIAFAITTILMLWSVSIKAASLLGDHSEQGKIMGWMEGLRGVGVMSLAVFTMWVFSRFAPDDSTSLKTVIIIYSVVYILLGILCWFFVSDNNNLRSANNEEKQSFQLSDILAVLRISTTWYCSMVIFGVFTIYAILSYSTNYLTEMYGMSLVAASYMGIVINKIFRALCGPLGGIITTYSKVKSPTRVIQILSVLGLLTLTALLVTNSNPQSVAMGIGLILLLGFTCYASRGLYWACPGEARTPSYIMGTTVGICSVIGFLPDVFVYPIIGHWQDTLPAAEAYRNMWLMGMAALGMVIVFTFLLFQKIRTADSAPAMASSK.

The Cytoplasmic segment spans residues 1–8 (MQHNSYRR). The helical transmembrane segment at 9 to 29 (WITLAIISFSGGVSFDLAYLR) threads the bilayer. Over 30–48 (YIYQIPMAKFMGFSNTEIG) the chain is Periplasmic. The chain crosses the membrane as a helical span at residues 49–69 (LIMSTFGIAAIILYAPSGVIA). The Cytoplasmic segment spans residues 70–75 (DKFSHR). 2 helical membrane passes run 76–96 (KMIT…ATYP) and 97–117 (PLWV…LMLW). At 118–138 (SVSIKAASLLGDHSEQGKIMG) the chain is on the cytoplasmic side. The chain crosses the membrane as a helical span at residues 139–159 (WMEGLRGVGVMSLAVFTMWVF). Topologically, residues 160-171 (SRFAPDDSTSLK) are periplasmic. A helical membrane pass occupies residues 172–192 (TVIIIYSVVYILLGILCWFFV). Over 193 to 219 (SDNNNLRSANNEEKQSFQLSDILAVLR) the chain is Cytoplasmic. Residues 220–240 (ISTTWYCSMVIFGVFTIYAIL) form a helical membrane-spanning segment. At 241 to 259 (SYSTNYLTEMYGMSLVAAS) the chain is on the periplasmic side. The helical transmembrane segment at 260-280 (YMGIVINKIFRALCGPLGGII) threads the bilayer. The Cytoplasmic portion of the chain corresponds to 281–291 (TTYSKVKSPTR). Residues 292–312 (VIQILSVLGLLTLTALLVTNS) form a helical membrane-spanning segment. Residue N313 is a topological domain, periplasmic. A helical membrane pass occupies residues 314-334 (PQSVAMGIGLILLLGFTCYAS). The Cytoplasmic segment spans residues 335 to 354 (RGLYWACPGEARTPSYIMGT). A helical transmembrane segment spans residues 355–375 (TVGICSVIGFLPDVFVYPIIG). The Periplasmic segment spans residues 376–388 (HWQDTLPAAEAYR). The helical transmembrane segment at 389–409 (NMWLMGMAALGMVIVFTFLLF) threads the bilayer. Residues 410 to 425 (QKIRTADSAPAMASSK) are Cytoplasmic-facing.

It to E.coli YihN.

The protein resides in the cell inner membrane. This is Inner membrane protein YqcE (yqcE) from Escherichia coli (strain K12).